Consider the following 218-residue polypeptide: Stress response regulator protein 1 (218 aa).

The Response regulatory domain occupies 90–209 (RFLLVDDNSI…YRVVLDVVDN (120 aa)). Aspartate 142 is subject to 4-aspartylphosphate.

Functionally, required for stress adaptation, morphogenesis and virulence. This Meyerozyma guilliermondii (strain ATCC 6260 / CBS 566 / DSM 6381 / JCM 1539 / NBRC 10279 / NRRL Y-324) (Yeast) protein is Stress response regulator protein 1 (SRR1).